The chain runs to 457 residues: Casein kinase 1-like protein 11 (457 aa).

A Protein kinase domain is found at 15 to 284 (FKLGRKLGSG…LRRLFRDLFI (270 aa)). ATP contacts are provided by residues 21–29 (LGSGSFGEL) and lysine 44. The Proton acceptor role is filled by aspartate 134. 2 disordered regions span residues 305–337 (GSSSRPRPTPRPALDPPGPPAERAEKPTVGQDL) and 352–442 (NVSS…EDAI). The span at 311-324 (RPTPRPALDPPGPP) shows a compositional bias: pro residues. Composition is skewed to polar residues over residues 383-403 (NGSTSKRGVISSTRPGSSAEP) and 409-429 (SRLFSSGSRHATTQRVPQSYE).

This sequence belongs to the protein kinase superfamily. CK1 Ser/Thr protein kinase family. Casein kinase I subfamily. In terms of assembly, monomer. In terms of processing, autophosphorylated.

The protein resides in the cytoplasm. It is found in the nucleus. The catalysed reaction is L-seryl-[protein] + ATP = O-phospho-L-seryl-[protein] + ADP + H(+). The enzyme catalyses L-threonyl-[protein] + ATP = O-phospho-L-threonyl-[protein] + ADP + H(+). Partially inhibited by N-(2-aminoethyl)-5-chloroisoquinoline-8-sulfonamide (CKI-7). Its function is as follows. Casein kinases are operationally defined by their preferential utilization of acidic proteins such as caseins as substrates. Can phosphorylate casein, phosvitin, myosin light chains and poly(Glu,Tyr) in vitro. This chain is Casein kinase 1-like protein 11, found in Arabidopsis thaliana (Mouse-ear cress).